Here is a 1129-residue protein sequence, read N- to C-terminus: ISWI chromatin-remodeling complex ATPase ISW1 (1129 aa).

The tract at residues 144–177 is disordered; sequence KANGKGKGKHQDVRRRKTEHEEDAELLKEEDSDD. Residues 147-160 show a composition bias toward basic residues; it reads GKGKGKHQDVRRRK. Residues 164 to 177 are compositionally biased toward acidic residues; the sequence is EEDAELLKEEDSDD. The Helicase ATP-binding domain occupies 208–373; it reads VSLHKNKIAG…WALLNFLLPD (166 aa). Residue 221–228 coordinates ATP; it reads DEMGLGKT. Residues 324 to 327 carry the DEAH box motif; it reads DEAH. Residues 506–657 form the Helicase C-terminal domain; the sequence is VLDKLLKKLK…QLVIQQNRTS (152 aa). Positions 683–705 are disordered; the sequence is FKSGTSTGSAGTPEPGSGEKGDD. Residue T694 is modified to Phosphothreonine. Residue S846 is modified to Phosphoserine. 2 consecutive SANT domains span residues 882-935 and 988-1052; these read EGFT…SNIE and NKRT…LLQC. Residues 1073–1108 are compositionally biased toward basic and acidic residues; it reads KEDENGKRIREEFADQTANEKENVDGVESKKAKIED. The interval 1073–1129 is disordered; it reads KEDENGKRIREEFADQTANEKENVDGVESKKAKIEDTSNVGTEQLVAEKIPENETTH.

It belongs to the SNF2/RAD54 helicase family. ISWI subfamily. As to quaternary structure, component of the ISW1A complex, which at least consists of ISW1 and IOC3. Component of the ISW1B complex, which at least consists of ISW1, IOC2 and IOC4.

The protein resides in the nucleus. Its function is as follows. Catalytic component of ISW1-type complexes, which act by remodeling the chromatin by catalyzing an ATP-dependent alteration in the structure of nucleosomal DNA. They are involved in coordinating transcriptional repression, activation and elongation phases. The ISW1A complex represses gene expression at initiation through specific positioning of a promoter proximal dinucleosome. The ISW1B complex acts within coding regions to control the amount of RNA polymerase II released into productive elongation and to coordinate elongation with termination and pre-mRNA processing. This chain is ISWI chromatin-remodeling complex ATPase ISW1 (ISW1), found in Saccharomyces cerevisiae (strain ATCC 204508 / S288c) (Baker's yeast).